The chain runs to 285 residues: Formate channel FocA (285 aa).

The Cytoplasmic segment spans residues Met1–His30. The helical transmembrane segment at Pro31–Thr56 threads the bilayer. Topologically, residues Thr57–Phe64 are periplasmic. The chain crosses the membrane as a helical span at residues Gly65 to Cys85. At Gly86–Lys112 the chain is on the cytoplasmic side. Residues Asn113–Ser135 traverse the membrane as a helical segment. The Periplasmic segment spans residues Gly136–Thr160. The chain crosses the membrane as a helical span at residues Phe161–Met181. Topologically, residues Ser182–Ser187 are cytoplasmic. A helical membrane pass occupies residues Leu188 to Ser205. Residues Gly206–Asn249 lie on the Periplasmic side of the membrane. Residues Phe250–Val276 form a helical membrane-spanning segment. Topologically, residues Ile277–His285 are cytoplasmic.

Belongs to the FNT transporter (TC 1.A.16) family. As to quaternary structure, homopentamer.

The protein localises to the cell inner membrane. It catalyses the reaction formate(in) = formate(out). Its function is as follows. Involved in the bidirectional transport of formate during mixed-acid fermentation. Functions to maintain relatively constant intracellular formate levels during growth, using different mechanisms for efflux and uptake of the anion. Is impermeable to water. The polypeptide is Formate channel FocA (Escherichia coli O157:H7).